The sequence spans 153 residues: Endoribonuclease YbeY (153 aa).

Residues His-114, His-118, and His-124 each coordinate Zn(2+).

It belongs to the endoribonuclease YbeY family. Zn(2+) is required as a cofactor.

Its subcellular location is the cytoplasm. Functionally, single strand-specific metallo-endoribonuclease involved in late-stage 70S ribosome quality control and in maturation of the 3' terminus of the 16S rRNA. The chain is Endoribonuclease YbeY from Shewanella denitrificans (strain OS217 / ATCC BAA-1090 / DSM 15013).